A 205-amino-acid chain; its full sequence is Phospholipase D (205 aa).

A signal peptide spans 1-22; sequence MKSKNNKFIAVSISFILGIALG. In terms of domain architecture, PLD phosphodiesterase spans 142–169; that stretch reads VPGIAHNKVIIIDKKKVITGSFNFTVSA. Catalysis depends on residues His-147, Lys-149, and Asp-154.

The protein belongs to the phospholipase D family. As to quaternary structure, homodimer.

The protein resides in the secreted. The enzyme catalyses a 1,2-diacyl-sn-glycero-3-phosphocholine + H2O = a 1,2-diacyl-sn-glycero-3-phosphate + choline + H(+). Its function is as follows. Could be a virulence factor. The protein is Phospholipase D (pld) of Rickettsia prowazekii (strain Madrid E).